Reading from the N-terminus, the 384-residue chain is uncharacterized protein (384 aa).

Disordered regions lie at residues 133–257 (RQNS…TNQD) and 297–368 (ERTP…STAT). Positions 143–157 (PSTSSEPEPQPSTSS) are enriched in low complexity. Residues 302 to 315 (DQTDITDDSADWSE) are compositionally biased toward acidic residues. The segment covering 316–342 (GETRRPSHSEVGERRLSRENNSEDPNR) has biased composition (basic and acidic residues). The span at 343–363 (SRSRSRSRERRRRRPRVRPGR) shows a compositional bias: basic residues.

This is an uncharacterized protein from Gallid herpesvirus 2 (strain Chicken/Md5/ATCC VR-987) (GaHV-2).